The following is an 86-amino-acid chain: Cell division topological specificity factor (86 aa).

This sequence belongs to the MinE family.

Prevents the cell division inhibition by proteins MinC and MinD at internal division sites while permitting inhibition at polar sites. This ensures cell division at the proper site by restricting the formation of a division septum at the midpoint of the long axis of the cell. The chain is Cell division topological specificity factor from Stenotrophomonas maltophilia (strain K279a).